The chain runs to 82 residues: Protein Rv1078A (82 aa).

The span at 35-54 (GGPTRRLRRRPAVTRRRRPD) shows a compositional bias: basic residues. The disordered stretch occupies residues 35–82 (GGPTRRLRRRPAVTRRRRPDRRFVRCRPSPTRRGLPGCWRHSSTGPHT).

The protein resides in the cytoplasm. This Mycobacterium tuberculosis (strain ATCC 25618 / H37Rv) protein is Protein Rv1078A.